The following is an 847-amino-acid chain: Rho GTPase-activating protein 12 (847 aa).

One can recognise an SH3 domain in the interval 12 to 74 (PGQAYIEVEY…PAQYVKEVTR (63 aa)). Positions 110–241 (LPELSSFGKP…PPNQGRPDSP (132 aa)) are disordered. Polar residues-rich tracts occupy residues 117–174 (GKPS…QNRT) and 191–200 (TSFSQEQSCD). Serine 165 carries the post-translational modification Phosphoserine. Residues serine 201, serine 213, and serine 215 each carry the phosphoserine modification. Residues 224–234 (TEQIRATTPPN) are compositionally biased toward polar residues. Residues threonine 230 and threonine 231 each carry the phosphothreonine modification. The residue at position 240 (serine 240) is a Phosphoserine. The residue at position 243 (tyrosine 243) is a Phosphotyrosine. 2 consecutive WW domains span residues 265 to 298 (IQIN…PPRW) and 358 to 391 (DYTN…LPKY). A disordered region spans residues 293 to 317 (WKPPRWTRDASISKGDFQSPGDQEL). Disordered regions lie at residues 428–466 (DTND…DQEK) and 591–625 (PDSP…SEQK). Over residues 445–461 (NESSPSSPKHQDTASSP) the composition is skewed to polar residues. In terms of domain architecture, PH spans 463–575 (DQEKYGLLNV…WFKVLSSTIN (113 aa)). Residue serine 593 is modified to Phosphoserine. Residues 595-610 (GIEKHDKEKEQKDPKK) show a composition bias toward basic and acidic residues. The Rho-GAP domain occupies 657 to 845 (SNLANLCQRE…LILLELSSIF (189 aa)).

GTPase activator for the Rho-type GTPases by converting them to an inactive GDP-bound state. This Macaca fascicularis (Crab-eating macaque) protein is Rho GTPase-activating protein 12 (ARHGAP12).